The primary structure comprises 564 residues: Keratin, type II cytoskeletal 6A (564 aa).

The span at 1 to 11 (MASTSTTIRSH) shows a compositional bias: low complexity. A disordered region spans residues 1-23 (MASTSTTIRSHSSSRRGFSANSA). At alanine 2 the chain carries N-acetylalanine. Residues 2–162 (ASTSTTIRSH…DPTIQRVRAE (161 aa)) are head. A coil 1A region spans residues 163–198 (EREQIKTLNNKFASFIDKVRFLEQQNKVLETKWTLL). In terms of domain architecture, IF rod spans 163 to 476 (EREQIKTLNN…KLLEGEECRL (314 aa)). A linker 1 region spans residues 199–217 (QEQGTKTVRQNLEPLFEQY). A coil 1B region spans residues 218–309 (INNLRRQLDS…ALYDAELSQM (92 aa)). The linker 12 stretch occupies residues 310 to 333 (QTHISDTSVVLSMDNNRNLDLDSI). The coil 2 stretch occupies residues 334 to 472 (IAEVKAQYEE…ATYRKLLEGE (139 aa)). The tail stretch occupies residues 473–564 (ECRLNGEGVG…SSSSRKSYKH (92 aa)).

This sequence belongs to the intermediate filament family. In terms of assembly, heterodimer of a type I and a type II keratin. KRT6 isomers associate with KRT16 and/or KRT17. Interacts with TCHP. As to expression, expressed in the corneal epithelium (at protein level).

Epidermis-specific type I keratin involved in wound healing. Involved in the activation of follicular keratinocytes after wounding, while it does not play a major role in keratinocyte proliferation or migration. Participates in the regulation of epithelial migration by inhibiting the activity of SRC during wound repair. The protein is Keratin, type II cytoskeletal 6A (KRT6A) of Homo sapiens (Human).